The primary structure comprises 282 residues: ATP synthase gamma chain (282 aa).

This sequence belongs to the ATPase gamma chain family. F-type ATPases have 2 components, CF(1) - the catalytic core - and CF(0) - the membrane proton channel. CF(1) has five subunits: alpha(3), beta(3), gamma(1), delta(1), epsilon(1). CF(0) has three main subunits: a, b and c.

Its subcellular location is the cell inner membrane. Produces ATP from ADP in the presence of a proton gradient across the membrane. The gamma chain is believed to be important in regulating ATPase activity and the flow of protons through the CF(0) complex. The protein is ATP synthase gamma chain of Fusobacterium nucleatum subsp. nucleatum (strain ATCC 25586 / DSM 15643 / BCRC 10681 / CIP 101130 / JCM 8532 / KCTC 2640 / LMG 13131 / VPI 4355).